Reading from the N-terminus, the 128-residue chain is Lymphocyte antigen 6D (128 aa).

The N-terminal stretch at 1–20 (MRTALLLLAALAVATGPALT) is a signal peptide. The 88-residue stretch at 21–108 (LRCHVCTSSS…AAPTRTALAH (88 aa)) folds into the UPAR/Ly6 domain. Cystine bridges form between Cys-23–Cys-45, Cys-26–Cys-32, Cys-38–Cys-63, Cys-67–Cys-86, and Cys-87–Cys-92. Asn-98 carries the GPI-anchor amidated asparagine lipid modification. A propeptide spans 99–128 (AAPTRTALAHSALSLGLALSLLAVILAPSL) (removed in mature form).

In terms of tissue distribution, expressed exclusively at the outer cell surface of transitional epithelia and the keratinocyte of stratified squamous epithelia.

The protein resides in the cell membrane. May act as a specification marker at earliest stage specification of lymphocytes between B- and T-cell development. Marks the earliest stage of B-cell specification. The sequence is that of Lymphocyte antigen 6D (LY6D) from Homo sapiens (Human).